Consider the following 233-residue polypeptide: MSNMVEVPIFIAILSFIVMCIGELLAYYSVSLKYKYEFEAISFGFIFGVATLILIPKSYSNMFVLYVILGMITVYLIEKYLAYCPLSKKYCVECDNLEENRIKFIYPISFFIHTFIDGLIIAVSYISEIGLPLYLAILMHKLPAGFVLISPLKGVYKNPLYPGVFVSFGTVLGTIVGLVTLKDVSTKILLAFSGGVFLGAFLMLAPHIYEHKEEKTFLYILLGYILVGIIALH.

6 helical membrane-spanning segments follow: residues 7–27, 36–56, 62–82, 119–139, 159–179, and 188–208; these read VPIFIAILSFIVMCIGELLAY, YEFEAISFGFIFGVATLILIP, MFVLYVILGMITVYLIEKYLA, LIIAVSYISEIGLPLYLAILM, PLYPGVFVSFGTVLGTIVGLV, and ILLAFSGGVFLGAFLMLAPHI.

It is found in the cell membrane. This is an uncharacterized protein from Methanocaldococcus jannaschii (strain ATCC 43067 / DSM 2661 / JAL-1 / JCM 10045 / NBRC 100440) (Methanococcus jannaschii).